A 224-amino-acid chain; its full sequence is Peroxiredoxin-6 (224 aa).

The Thioredoxin domain maps to Leu-5–Leu-169. Positions Asp-31 to Pro-40 are required and sufficient for targeting to lysosomes and lamellar bodies. Thr-44 bears the Phosphothreonine mark. The active-site Cysteine sulfenic acid (-SOH) intermediate; for peroxidase activity is Cys-47. Lys-63 carries the N6-acetyllysine modification. Tyr-89 carries the post-translational modification Phosphotyrosine. Catalysis depends on Asp-140, which acts as the For phospholipase activity. Thr-177 carries the post-translational modification Phosphothreonine; by MAPK. The residue at position 209 (Lys-209) is an N6-acetyllysine; alternate. Lys-209 bears the N6-succinyllysine; alternate mark.

The protein belongs to the peroxiredoxin family. Prx6 subfamily. As to quaternary structure, homodimer. Interacts with GSTP1; mediates PRDX6 glutathionylation and regeneration. Interacts with APEX1. Interacts with STH. May interact with FAM168B. May interact with HTR2A. In terms of processing, irreversibly inactivated by overoxidation of Cys-47 to sulfinic acid (Cys-SO(2)H) and sulfonic acid (Cys-SO(3)H) forms upon oxidative stress. Phosphorylation at Thr-177 by MAP kinases increases the phospholipase activity of the enzyme. The phosphorylated form exhibits a greater lysophosphatidylcholine acyltransferase activity compared to the non-phosphorylated form.

It is found in the cytoplasm. The protein localises to the lysosome. It catalyses the reaction a hydroperoxide + 2 glutathione = an alcohol + glutathione disulfide + H2O. The catalysed reaction is a 1,2-diacyl-sn-glycero-3-phosphocholine + H2O = a 1-acyl-sn-glycero-3-phosphocholine + a fatty acid + H(+). It carries out the reaction a 1-acyl-sn-glycero-3-phosphocholine + an acyl-CoA = a 1,2-diacyl-sn-glycero-3-phosphocholine + CoA. The enzyme catalyses 1-hexadecanoyl-sn-glycero-3-phosphocholine + hexadecanoyl-CoA = 1,2-dihexadecanoyl-sn-glycero-3-phosphocholine + CoA. It catalyses the reaction 1,2-dihexadecanoyl-sn-glycero-3-phosphocholine + H2O = 1-hexadecanoyl-sn-glycero-3-phosphocholine + hexadecanoate + H(+). MJ33 or lithium;[(2R)-1-hexadecoxy-3-(2,2,2-trifluoroethoxy)propan-2-yl] methyl phosphate inhibits its phospholipase A2 activity. CI-976 or 2,2-Dimethyl-N-(2,4,6-trimethoxyphenyl)dodecanamide inhibits its lysophosphatidylcholine acyltransferase activity. Functionally, thiol-specific peroxidase that catalyzes the reduction of hydrogen peroxide and organic hydroperoxides to water and alcohols, respectively. Can reduce H(2)O(2) and short chain organic, fatty acid, and phospholipid hydroperoxides. Also has phospholipase activity, can therefore either reduce the oxidized sn-2 fatty acyl group of phospholipids (peroxidase activity) or hydrolyze the sn-2 ester bond of phospholipids (phospholipase activity). These activities are dependent on binding to phospholipids at acidic pH and to oxidized phospholipds at cytosolic pH. Plays a role in cell protection against oxidative stress by detoxifying peroxides and in phospholipid homeostasis. Exhibits acyl-CoA-dependent lysophospholipid acyltransferase which mediates the conversion of lysophosphatidylcholine (1-acyl-sn-glycero-3-phosphocholine or LPC) into phosphatidylcholine (1,2-diacyl-sn-glycero-3-phosphocholine or PC). Shows a clear preference for LPC as the lysophospholipid and for palmitoyl CoA as the fatty acyl substrate. This is Peroxiredoxin-6 (PRDX6) from Homo sapiens (Human).